Reading from the N-terminus, the 90-residue chain is UPF0213 protein lwe0147 (90 aa).

Positions 5 to 83 (NEHFFYVLKC…SRKNKDSYLI (79 aa)) constitute a GIY-YIG domain.

Belongs to the UPF0213 family.

This chain is UPF0213 protein lwe0147, found in Listeria welshimeri serovar 6b (strain ATCC 35897 / DSM 20650 / CCUG 15529 / CIP 8149 / NCTC 11857 / SLCC 5334 / V8).